Here is a 290-residue protein sequence, read N- to C-terminus: Hsp70 nucleotide exchange factor FES1 (290 aa).

Residue serine 12 is modified to Phosphoserine. 6 ARM repeats span residues 13–57, 76–116, 120–161, 164–205, 211–251, and 253–290; these read QGDK…NPEV, LDNA…TAVQ, DSQN…NLIR, KDIS…AYLS, ENII…HLIS, and GIKF…KYVL.

It belongs to the FES1 family. Interacts with the Hsp70 chaperones SSA1 and SSB1.

The protein localises to the cytoplasm. Involved in protein translation, propagation of [PSI+] prions, and polyamine tolerance. Functions as a nucleotide exchange factor (NEF), which accelerates the release of ADP, for the cytosolic Hsp70 chaperone SSA1 and the ribosome-associated Hsp70 chaperone SSB1. Required for fully efficient Hsp70-mediated folding of proteins. The chain is Hsp70 nucleotide exchange factor FES1 (FES1) from Saccharomyces cerevisiae (strain ATCC 204508 / S288c) (Baker's yeast).